The chain runs to 304 residues: Ribosomal RNA small subunit methyltransferase H (304 aa).

S-adenosyl-L-methionine-binding positions include 36-38, D55, F81, D102, and Q109; that span reads CGH.

This sequence belongs to the methyltransferase superfamily. RsmH family.

The protein localises to the cytoplasm. The catalysed reaction is cytidine(1402) in 16S rRNA + S-adenosyl-L-methionine = N(4)-methylcytidine(1402) in 16S rRNA + S-adenosyl-L-homocysteine + H(+). Its function is as follows. Specifically methylates the N4 position of cytidine in position 1402 (C1402) of 16S rRNA. This is Ribosomal RNA small subunit methyltransferase H from Onion yellows phytoplasma (strain OY-M).